The sequence spans 312 residues: MDVLDYLDMSESSEKFHVSVLSEKDKFKIESADITLKEGDDFKRISTIRNIFDRKNVIFYGKYLSESFVKLETASGKFELPIVNIDHIYDQISKIRNQEKRKTLSCIHISTIQIVLKSTFLKGLDYPISLAITDERINNPKEKIIGIVHGNLATVTLKFSVHLGFAIPLTEEDLSRSISLTYKAYRNDLMNDQKQGFSITYAVSYALANSHHSIQFANKDRIYLDEIFKQVSFTEKPRPISPIKPNGLKFLKKKPSNLEDLIGVPRNHLSLQPPPLRVARKDSEESSSTSVPEIENLTKQVKDISSYLKDRL.

The tract at residues 266-293 (RNHLSLQPPPLRVARKDSEESSSTSVPE) is disordered. Positions 278 to 307 (VARKDSEESSSTSVPEIENLTKQVKDISSY) form a coiled coil.

The protein belongs to the caulimoviridae movement protein family. In terms of assembly, homotrimer, through the coiled-coil domain. Interacts with VAP.

The protein resides in the host cell junction. Its subcellular location is the host plasmodesma. Transports viral genome to neighboring plant cells directly through plasmosdesmata, without any budding. The movement protein allows efficient cell to cell propagation, by bypassing the host cell wall barrier. Acts by forming tubules structures that increase the size exclusion limit (SEL) of plasmodesmata, thereby allowing viral ribonucleocapsids to spread directly to neighboring cells. The polypeptide is Putative movement protein (Cestrum parqui (CmYLCV)).